We begin with the raw amino-acid sequence, 185 residues long: Large ribosomal subunit protein bL25 (185 aa).

This sequence belongs to the bacterial ribosomal protein bL25 family. CTC subfamily. Part of the 50S ribosomal subunit; part of the 5S rRNA/L5/L18/L25 subcomplex. Contacts the 5S rRNA. Binds to the 5S rRNA independently of L5 and L18.

In terms of biological role, this is one of the proteins that binds to the 5S RNA in the ribosome where it forms part of the central protuberance. This is Large ribosomal subunit protein bL25 from Laribacter hongkongensis (strain HLHK9).